The primary structure comprises 151 residues: Large ribosomal subunit protein uL13 (151 aa).

A disordered region spans residues 126 to 151; that stretch reads YPGPNHPHQAQKPEELTLNTIPNGDK. A compositionally biased stretch (polar residues) spans 142–151; that stretch reads TLNTIPNGDK.

This sequence belongs to the universal ribosomal protein uL13 family. In terms of assembly, part of the 50S ribosomal subunit.

This protein is one of the early assembly proteins of the 50S ribosomal subunit, although it is not seen to bind rRNA by itself. It is important during the early stages of 50S assembly. The chain is Large ribosomal subunit protein uL13 from Crocosphaera subtropica (strain ATCC 51142 / BH68) (Cyanothece sp. (strain ATCC 51142)).